A 151-amino-acid polypeptide reads, in one-letter code: Probable ribonuclease P/MRP protein subunit POP5 (151 aa).

Belongs to the eukaryotic/archaeal RNase P protein component 2 family. In terms of assembly, component of nuclear RNase P and RNase MRP ribonucleoproteins. Interacts with GAF1/RPP30.

It localises to the nucleus. The protein resides in the nucleolus. Essential protein required during embryogenesis. Component of ribonuclease P, a protein complex that generates mature tRNA molecules by cleaving their 5'-ends. Also a component of RNase MRP. The polypeptide is Probable ribonuclease P/MRP protein subunit POP5 (EMB1687) (Arabidopsis thaliana (Mouse-ear cress)).